Reading from the N-terminus, the 884-residue chain is MGMAMRCVLVLFSVSPVLLLFNFEMLEVALHLASREKELDTAAVTPSASLSFLSRFRIMLGMNHHRSRGRRHKRCSEAPAPAPAPALVPAHQARSEAPAPLVHVPRKGMPSTHRSHIAPARSPVHKVKDGGHTKIPRSAIVALGVVGLCLVVLGVVIAAFSVRRSRKFKKVCTKAFKPFHHGSRDQRSPAATRKVSSHPSPDPLTLSSIVQYQQNLPNLKQSSESKSLSIQSTIPMGTELIVSDHAVINNSQSDEVESFHSIPCSDLSAGSITELPQQICDRRAIMNRSEYFLQTHDSPSDSSYQSLSPDCTSRLSPKDQTFTASSHLSLRSKTCPEKSDGENAEINCHDGLEITCISGSMEHKEAPIEERARINFRNPPSQHIFPPSYRTDTSQSKINIAFTMTNSEVESSSKESSRIETSSSMGIPKPAPPPPPQKNPPPNLKGQCYGQPPPPPPLPLQIQVGKDGSPLPRLKPLHWDKVRAAPNRSMVWNDIRSSSFEFEFDEQMIKSLFAYNLQGSMKDEEAMNKTASTTKHVIEHHRLQNTTILLKTLNANTSQVCNSVIQGNGLSVQQLEALVKMKPTKEEEEKLLNYDGDINMLDPAENFVKVLLTIPMAFPRMEVMLYKENFDDEVAHIKMSFAMIEGACTELKSSKLFLRLLEAVLKTGNRMNVGTLRGGASAFKLDALLKLADIRGTDGKTTLLHFVVKEMARSKGLKALEKLNETPSSCHDTPTEREEYSSMGTEFVSELSNELGNVKKVASIDLDTLRNSISNLSCGLAQLRNLVEKDLASDDKNNNFLQCMKSFLNHAENTMQGLKADEAQVLLNVRELTEYYHGEVSKDESNLLQIFIIVKDFLGLLDKVCREMRGTKHNQTLNLVLPLK.

A signal peptide spans 1–19 (MGMAMRCVLVLFSVSPVLL). The chain crosses the membrane as a helical span at residues 140–160 (IVALGVVGLCLVVLGVVIAAF). 3 disordered regions span residues 179–204 (FHHG…PDPL), 295–318 (THDS…LSPK), and 403–473 (TMTN…PLPR). Residues 300-310 (SDSSYQSLSPD) show a composition bias toward low complexity. Residues 429-443 (KPAPPPPPQKNPPPN) show a composition bias toward pro residues. Residues 464–884 (VGKDGSPLPR…QTLNLVLPLK (421 aa)) form the FH2 domain.

The protein belongs to the formin-like family. Class-I subfamily.

Its subcellular location is the membrane. The protein is Formin-like protein 9 (FH9) of Oryza sativa subsp. indica (Rice).